A 150-amino-acid chain; its full sequence is Ribonuclease H (150 aa).

Positions 1–141 (MKSIEVHTDG…VDVLARNQAI (141 aa)) constitute an RNase H type-1 domain. Mg(2+) contacts are provided by Asp-9, Glu-47, Asp-69, and Asp-133.

It belongs to the RNase H family. As to quaternary structure, monomer. Mg(2+) is required as a cofactor.

The protein localises to the cytoplasm. It carries out the reaction Endonucleolytic cleavage to 5'-phosphomonoester.. Its function is as follows. Endonuclease that specifically degrades the RNA of RNA-DNA hybrids. This chain is Ribonuclease H, found in Xanthomonas axonopodis pv. citri (strain 306).